Reading from the N-terminus, the 245-residue chain is MSEFTVYPAIDIRNGKCVRLIQGDYEKETIYGHSPLEMASRFAEEGASWIHLVDLDGAREGKKVNGGHVISIADKLDVKVQVGGGIRTEKDVYDYLSQGVERVILGSSAVSNTEFVKKMLKAYGGHIAIGLDARDGFVSTEGWLETSSVRAEELGRELANEGAEVFIFTDIATDGMLSGPNINSTVELARATGKQVIASGGVSSLADLEALASRASEGVSGAIVGKALYTNQFTVAEALERVAAK.

D11 serves as the catalytic Proton acceptor. The active-site Proton donor is D132.

The protein belongs to the HisA/HisF family.

Its subcellular location is the cytoplasm. It catalyses the reaction 1-(5-phospho-beta-D-ribosyl)-5-[(5-phospho-beta-D-ribosylamino)methylideneamino]imidazole-4-carboxamide = 5-[(5-phospho-1-deoxy-D-ribulos-1-ylimino)methylamino]-1-(5-phospho-beta-D-ribosyl)imidazole-4-carboxamide. Its pathway is amino-acid biosynthesis; L-histidine biosynthesis; L-histidine from 5-phospho-alpha-D-ribose 1-diphosphate: step 4/9. This Bacillus licheniformis (strain ATCC 14580 / DSM 13 / JCM 2505 / CCUG 7422 / NBRC 12200 / NCIMB 9375 / NCTC 10341 / NRRL NRS-1264 / Gibson 46) protein is 1-(5-phosphoribosyl)-5-[(5-phosphoribosylamino)methylideneamino] imidazole-4-carboxamide isomerase.